Reading from the N-terminus, the 730-residue chain is Probable G-protein coupled receptor 149 (730 aa).

At 1 to 34 the chain is on the extracellular side; sequence MSFFLSNLTNDSRLWKVSHNSTDLMNSPETLTLS. 3 N-linked (GlcNAc...) asparagine glycosylation sites follow: asparagine 7, asparagine 10, and asparagine 20. A helical membrane pass occupies residues 35–55; sequence LFCLICLMTLVALVGSIFSLV. Topologically, residues 56–68 are cytoplasmic; the sequence is SLLTMQYRTVVSM. The chain crosses the membrane as a helical span at residues 69–89; sequence LVTSWSVDDLLSVLSVAIFMV. The Extracellular segment spans residues 90-108; that stretch reads LQWPREAPGYFQSLCTTSA. A disulfide bridge links cysteine 104 with cysteine 181. Residues 109–131 traverse the membrane as a helical segment; the sequence is LLYMCQGLSSNLKATLIVFYNFY. The Cytoplasmic portion of the chain corresponds to 132–148; it reads TMHRTVVSQSSSWRSGQ. A helical transmembrane segment spans residues 149–169; that stretch reads VLGVALTVWAVSLLLASLPLC. Residues 170–188 lie on the Extracellular side of the membrane; the sequence is GWGVFVRTPWGCLTDCSSP. Residues 189 to 209 traverse the membrane as a helical segment; that stretch reads YVLLLFAVYASAFGLLAVLSV. The Cytoplasmic portion of the chain corresponds to 210 to 308; it reads PLTHQLLCSE…SFPVSLAQKR (99 aa). A helical transmembrane segment spans residues 309 to 329; sequence FALILALTKVILWLPMMIHMV. Topologically, residues 330–340 are extracellular; sequence VKHVVGFQSLP. Residues 341–361 traverse the membrane as a helical segment; the sequence is VDMLSFLLTLLASTVTPVFVL. Residues 362–730 lie on the Cytoplasmic side of the membrane; the sequence is SKRWAHLPCG…RKREAESKGN (369 aa).

It belongs to the G-protein coupled receptor 1 family. In terms of tissue distribution, expressed exclusively in brain and testis.

The protein resides in the cell membrane. In terms of biological role, orphan receptor. In Rattus norvegicus (Rat), this protein is Probable G-protein coupled receptor 149 (Gpr149).